The sequence spans 313 residues: Interferon-inducible double-stranded RNA-dependent protein kinase activator A (313 aa).

Positions 1–20 are disordered; it reads MSHSRHRAEAPPLQREDSGT. 3 sufficient for self-association and interaction with TARBP2 regions span residues 1 to 103, 102 to 195, and 195 to 313; these read MSHS…KANA, NASI…FSNI, and ISPE…AERK. Residue serine 18 is modified to Phosphoserine. DRBM domains lie at 34–101, 126–194, and 240–308; these read TPIQ…ILKA, NPIG…KFSN, and DYIQ…YLKI. Phosphoserine occurs at positions 167, 246, and 287.

Belongs to the PRKRA family. In terms of assembly, homodimer. Interacts with DICER1, AGO2 and TARBP2. Also able to interact with dsRNA. Interacts with EIF2AK2/PKR through its DRBM domains. Interacts with DUS2L (via DRBM domain). Interacts with UBC9. Forms a complex with UBC9 and p53/TP53. Post-translationally, phosphorylated at Ser-246 in unstressed cells and at Ser-287 in stressed cells. Phosphorylation at Ser-246 appears to be a prerequisite for subsequent phosphorylation at Ser-287. Phosphorylation at Ser-246 and Ser-287 are necessary for activation of EIF2AK2/PKR under conditions of stress. Expressed in brain, heart, kidney, liver, lung, muscle, spleen and testis.

It localises to the cytoplasm. It is found in the perinuclear region. In terms of biological role, required for siRNA production by DICER1 and for subsequent siRNA-mediated post-transcriptional gene silencing. Does not seem to be required for processing of pre-miRNA to miRNA by DICER1. Activates EIF2AK2/PKR in the absence of double-stranded RNA (dsRNA), leading to phosphorylation of EIF2S1/EFI2-alpha and inhibition of translation and induction of apoptosis. Promotes UBC9-p53/TP53 association and sumoylation and phosphorylation of p53/TP53 at 'Lys-386' at 'Ser-392' respectively and enhances its activity in a EIF2AK2/PKR-dependent manner. The polypeptide is Interferon-inducible double-stranded RNA-dependent protein kinase activator A (Prkra) (Mus musculus (Mouse)).